A 216-amino-acid polypeptide reads, in one-letter code: Probable GTP-binding protein EngB (216 aa).

An EngB-type G domain is found at 23–197; that stretch reads EGAEIAFAGR…EHKVAGWLGL (175 aa). GTP is bound by residues 31 to 38, 58 to 62, 76 to 79, 143 to 146, and 176 to 178; these read GRSNAGKS, GRTQL, DLPG, TKCD, and FSS. Mg(2+) is bound by residues serine 38 and threonine 60.

The protein belongs to the TRAFAC class TrmE-Era-EngA-EngB-Septin-like GTPase superfamily. EngB GTPase family. The cofactor is Mg(2+).

Functionally, necessary for normal cell division and for the maintenance of normal septation. In Aromatoleum aromaticum (strain DSM 19018 / LMG 30748 / EbN1) (Azoarcus sp. (strain EbN1)), this protein is Probable GTP-binding protein EngB.